The primary structure comprises 351 residues: Translation initiation factor eIF2B subunit beta (351 aa).

The protein belongs to the eIF-2B alpha/beta/delta subunits family. As to quaternary structure, component of the translation initiation factor 2B (eIF2B) complex which is a heterodecamer of two sets of five different subunits: alpha, beta, gamma, delta and epsilon. Subunits alpha, beta and delta comprise a regulatory subcomplex and subunits epsilon and gamma comprise a catalytic subcomplex. Within the complex, the hexameric regulatory complex resides at the center, with the two heterodimeric catalytic subcomplexes bound on opposite sides.

The protein localises to the cytoplasm. It localises to the cytosol. Activated by the chemical integrated stress response (ISR) inhibitor ISRIB which stimulates guanine nucleotide exchange factor activity for both phosphorylated and unphosphorylated eIF2. Its function is as follows. Acts as a component of the translation initiation factor 2B (eIF2B) complex, which catalyzes the exchange of GDP for GTP on eukaryotic initiation factor 2 (eIF2) gamma subunit. Its guanine nucleotide exchange factor activity is repressed when bound to eIF2 complex phosphorylated on the alpha subunit, thereby limiting the amount of methionyl-initiator methionine tRNA available to the ribosome and consequently global translation is repressed. The protein is Translation initiation factor eIF2B subunit beta (Eif2b2) of Rattus norvegicus (Rat).